A 360-amino-acid polypeptide reads, in one-letter code: GTPase Obg (360 aa).

In terms of domain architecture, Obg spans 1–156 (MFVDSVEIII…KCVRLELKLI (156 aa)). The OBG-type G domain occupies 157–360 (ADIGLVGFPN…LKFVLLEALP (204 aa)). Residues 163-170 (GFPNAGKS), 188-192 (FTTLV), 210-213 (DIPG), 279-282 (NKCD), and 341-343 (SAV) each bind GTP. Positions 170 and 190 each coordinate Mg(2+).

It belongs to the TRAFAC class OBG-HflX-like GTPase superfamily. OBG GTPase family. As to quaternary structure, monomer. Mg(2+) is required as a cofactor.

Its subcellular location is the cytoplasm. Functionally, an essential GTPase which binds GTP, GDP and possibly (p)ppGpp with moderate affinity, with high nucleotide exchange rates and a fairly low GTP hydrolysis rate. Plays a role in control of the cell cycle, stress response, ribosome biogenesis and in those bacteria that undergo differentiation, in morphogenesis control. The sequence is that of GTPase Obg from Helicobacter pylori (strain ATCC 700392 / 26695) (Campylobacter pylori).